Reading from the N-terminus, the 311-residue chain is tRNA-cytidine(32) 2-sulfurtransferase (311 aa).

The short motif at 47 to 52 (SGGKDS) is the PP-loop motif element. [4Fe-4S] cluster contacts are provided by cysteine 122, cysteine 125, and cysteine 213.

Belongs to the TtcA family. In terms of assembly, homodimer. Requires Mg(2+) as cofactor. [4Fe-4S] cluster is required as a cofactor.

It localises to the cytoplasm. The enzyme catalyses cytidine(32) in tRNA + S-sulfanyl-L-cysteinyl-[cysteine desulfurase] + AH2 + ATP = 2-thiocytidine(32) in tRNA + L-cysteinyl-[cysteine desulfurase] + A + AMP + diphosphate + H(+). Its pathway is tRNA modification. Catalyzes the ATP-dependent 2-thiolation of cytidine in position 32 of tRNA, to form 2-thiocytidine (s(2)C32). The sulfur atoms are provided by the cysteine/cysteine desulfurase (IscS) system. The polypeptide is tRNA-cytidine(32) 2-sulfurtransferase (Escherichia coli O1:K1 / APEC).